A 387-amino-acid chain; its full sequence is Cyclin-B1-4 (387 aa).

Residues 1 to 29 (MASSRVSDLPHQRGIAGEIKPKNVAGHGR) form a disordered region.

It belongs to the cyclin family. Cyclin AB subfamily.

The chain is Cyclin-B1-4 (CYCB1-4) from Arabidopsis thaliana (Mouse-ear cress).